A 334-amino-acid chain; its full sequence is Putative violet-sensitive opsin (334 aa).

Residues 1 to 29 lie on the Extracellular side of the membrane; the sequence is MGKYFYLYENISKVGPYDGPQYYLAPTWA. N-linked (GlcNAc...) asparagine glycosylation is present at N10. A helical membrane pass occupies residues 30–54; that stretch reads FYLQAAFMGFVFFVGTPLNFVVLLA. The Cytoplasmic segment spans residues 55 to 66; that stretch reads TAKYKKLRVPLN. The helical transmembrane segment at 67 to 88 threads the bilayer; that stretch reads YILVNITFAGFIFVTFSVSQVF. Topologically, residues 89–106 are extracellular; it reads LASVRGYYFFGQTLCALE. C103 and C179 form a disulfide bridge. A helical membrane pass occupies residues 107–126; it reads AAVGAVAGLVTSWSLAVLSF. Topologically, residues 127 to 145 are cytoplasmic; sequence ERYLVICKPFGAFKFGSNH. The chain crosses the membrane as a helical span at residues 146 to 168; it reads ALAAVIFTWFMGVVRCPPFFGWS. Residues 169–194 lie on the Extracellular side of the membrane; the sequence is RYIPEGLGCSCGPDWYTNCEEFSCAS. The helical transmembrane segment at 195–222 threads the bilayer; sequence YSKFLLVTCFICPITIIIFSYSQLLGAL. The Cytoplasmic portion of the chain corresponds to 223–244; sequence RAVAAQQAESASTQKAEKEVSR. A helical membrane pass occupies residues 245–272; it reads MIIVMVASFVTCYGPYALTAQYYAYSQD. Residues 273 to 279 lie on the Extracellular side of the membrane; it reads ENKDYRL. The chain crosses the membrane as a helical span at residues 280–301; the sequence is VTIPAFFSKSSCVYNPLIYAFM. Residue K288 is modified to N6-(retinylidene)lysine. The Cytoplasmic segment spans residues 302-334; it reads NKQFNGCIMEMVFGKKMEEASEVSSKTEVSTDS.

It belongs to the G-protein coupled receptor 1 family. Opsin subfamily. Post-translationally, phosphorylated on some or all of the serine and threonine residues present in the C-terminal region. As to expression, the three color pigments are found in the cone photoreceptor cells.

It is found in the membrane. In terms of biological role, visual pigments are the light-absorbing molecules that mediate vision. They consist of an apoprotein, opsin, covalently linked to cis-retinal. This is Putative violet-sensitive opsin from Oryzias latipes (Japanese rice fish).